An 858-amino-acid polypeptide reads, in one-letter code: DNA mismatch repair protein MutS (858 aa).

602 to 609 (GPNMSGKS) is a binding site for ATP.

This sequence belongs to the DNA mismatch repair MutS family.

In terms of biological role, this protein is involved in the repair of mismatches in DNA. It is possible that it carries out the mismatch recognition step. This protein has a weak ATPase activity. Overexpression of mutSL partially suppresses the high spontaneous mutation frequency of a ytkD/mutM/mutY triple disruption which lacks the system required to prevent damage by oxidized guanine (8-oxo-dGTP). This suggests that MutSL also functions to repair mismatches due to oxidative stress in both growing and stationary phase cells. In Bacillus subtilis (strain 168), this protein is DNA mismatch repair protein MutS.